Reading from the N-terminus, the 1128-residue chain is Scavenger receptor cysteine-rich domain superfamily protein (1128 aa).

Residues 1 to 24 (MTSLRRGNICWVAVCAALLTLTRG) form the signal peptide. Residues 25 to 1051 (IDVIAKPSRT…VGAQAGPAGG (1027 aa)) are Extracellular-facing. SRCR domains are found at residues 40 to 140 (VQLV…VVCN), 143 to 245 (VRLA…VICT), 248 to 348 (IRLV…VICT), 351 to 450 (VRLV…AKCQ), 453 to 553 (VQLV…VVCR), 555 to 654 (IRLA…VVCR), 657 to 757 (LRLA…VVCT), 759 to 866 (LRLT…VLCK), and 868 to 968 (IRLV…VQCK). 21 disulfides stabilise this stretch: cysteine 65-cysteine 129, cysteine 78-cysteine 139, cysteine 109-cysteine 119, cysteine 168-cysteine 234, cysteine 181-cysteine 244, cysteine 212-cysteine 222, cysteine 273-cysteine 337, cysteine 286-cysteine 347, cysteine 316-cysteine 326, cysteine 376-cysteine 439, cysteine 389-cysteine 449, cysteine 419-cysteine 429, cysteine 478-cysteine 542, cysteine 491-cysteine 552, cysteine 522-cysteine 532, cysteine 583-cysteine 644, cysteine 596-cysteine 653, cysteine 624-cysteine 634, cysteine 682-cysteine 746, cysteine 695-cysteine 756, and cysteine 726-cysteine 736. Asparagine 87 is a glycosylation site (N-linked (GlcNAc...) asparagine). Residues asparagine 190 and asparagine 194 are each glycosylated (N-linked (GlcNAc...) asparagine). Residue asparagine 229 is glycosylated (N-linked (GlcNAc...) asparagine). Asparagine 422 is a glycosylation site (N-linked (GlcNAc...) asparagine). N-linked (GlcNAc...) asparagine glycans are attached at residues asparagine 601 and asparagine 612. N-linked (GlcNAc...) asparagine glycans are attached at residues asparagine 765, asparagine 808, asparagine 834, and asparagine 936. Intrachain disulfides connect cysteine 803-cysteine 865, cysteine 833-cysteine 843, cysteine 906-cysteine 967, cysteine 937-cysteine 947, cysteine 971-cysteine 1013, and cysteine 999-cysteine 1026. In terms of domain architecture, Sushi spans 969-1028 (AGCDWPGPIRHGSFSPNRSSYDPLTTIDVKCDAGYELMGSKTLQCVTGCDWSRPTPECQR). Asparagine 985 carries N-linked (GlcNAc...) asparagine glycosylation. Residue asparagine 1031 is glycosylated (N-linked (GlcNAc...) asparagine). A helical transmembrane segment spans residues 1052–1072 (VMLIIGIILGAVVMMLIACVA). Over 1073 to 1128 (LYLKGRNKNIGRGNPATTSAIWKPKKEFDELKEPVLSFSAMTAGGAGPEDGMGEDI) the chain is Cytoplasmic.

From the mid-gastrula stage, expressed only in mesenchyme cells that are migrating toward the body wall. At the brachiolaria stage, expressed in presumptive coelomocytes of the coelomic pouch. Also expressed in adult coelomocytes (at protein level).

Its subcellular location is the cytoplasmic vesicle membrane. Its function is as follows. Involved in aggregate formation and phagocytosis by larval mesenchyme cells and adult coelomocytes. Binds to bacteria and may act as an opsonin in the innate immune system. This chain is Scavenger receptor cysteine-rich domain superfamily protein, found in Patiria pectinifera (Starfish).